Here is a 72-residue protein sequence, read N- to C-terminus: Translation initiation factor IF-1 (72 aa).

The 72-residue stretch at 1 to 72 (MAKSDVIEME…SKGRIVYRAR (72 aa)) folds into the S1-like domain.

This sequence belongs to the IF-1 family. As to quaternary structure, component of the 30S ribosomal translation pre-initiation complex which assembles on the 30S ribosome in the order IF-2 and IF-3, IF-1 and N-formylmethionyl-tRNA(fMet); mRNA recruitment can occur at any time during PIC assembly.

It is found in the cytoplasm. In terms of biological role, one of the essential components for the initiation of protein synthesis. Stabilizes the binding of IF-2 and IF-3 on the 30S subunit to which N-formylmethionyl-tRNA(fMet) subsequently binds. Helps modulate mRNA selection, yielding the 30S pre-initiation complex (PIC). Upon addition of the 50S ribosomal subunit IF-1, IF-2 and IF-3 are released leaving the mature 70S translation initiation complex. The chain is Translation initiation factor IF-1 from Marinobacter nauticus (strain ATCC 700491 / DSM 11845 / VT8) (Marinobacter aquaeolei).